Reading from the N-terminus, the 1149-residue chain is Transforming acidic coiled-coil-containing protein 2 (1149 aa).

Disordered stretches follow at residues 1–73 (MGNE…GSNQ), 91–227 (SASP…ASSG), and 247–430 (PCSA…VPLT). The span at 13 to 35 (TSSVQSPRSLQPPGKSQSLQKQQ) shows a compositional bias: polar residues. Positions 91–106 (SASPSAARASPAPLAP) are enriched in low complexity. The residue at position 100 (S100) is a Phosphoserine. The segment covering 155–180 (KAPPAPPPPPPEVTPEPEVIDPPAPE) has biased composition (pro residues). Position 265 is a phosphoserine (S265). Polar residues-rich tracts occupy residues 267 to 284 (ESVP…SLQA) and 300 to 317 (TLTT…SSTL). The segment covering 318 to 334 (KRTKKTRPPSLKKKQAT) has biased composition (basic residues). S354 bears the Phosphoserine mark. Positions 358–368 (SEEHLAPETKT) are enriched in basic and acidic residues. S419 is subject to Phosphoserine. T439 carries the post-translational modification Phosphothreonine. The interval 463-617 (SEDKGSWESQ…PAKKKKTPLK (155 aa)) is disordered. Positions 481–498 (KIGKKPVAKMPLRRPKMK) are enriched in basic residues. Residues 508-596 (PASPPRSPTE…SPASFEIPAS (89 aa)) form the SPAZ domain. A phosphoserine mark is found at S510 and S514. Phosphothreonine is present on T516. The segment covering 541-561 (NPFSSTSKMQESPKLSQQSYN) has biased composition (polar residues). A phosphoserine mark is found at S552, S582, S585, S587, and S596. The segment covering 575–590 (KASSKTPSSPSKSPAS) has biased composition (low complexity). Residues T632, T653, and T657 each carry the phosphothreonine modification. 2 disordered regions span residues 636 to 665 (KKSP…SAIS) and 696 to 719 (DFPQ…SEEL). A compositionally biased stretch (low complexity) spans 652 to 665 (PTPAATPEAPSAIS). Polar residues predominate over residues 701–716 (SDLSNFVNETKFNSPS). Phosphoserine is present on residues S714 and S736. T755 is subject to Phosphothreonine. Residues 756-780 (PQESPVKSPPVRMSDSPTPCSGSSF) are disordered. Residues S759 and S771 each carry the phosphoserine modification. Residues 770–780 (DSPTPCSGSSF) show a composition bias toward polar residues. 2 coiled-coil regions span residues 877–905 (AQKL…LASR) and 948–1148 (DLDS…KMGK).

The protein belongs to the TACC family. As to quaternary structure, interacts with microtubules. Interacts with YEATS4, GCN5L2 and PCAF. Interacts with CCDC100/CEP120. Post-translationally, phosphorylated; which is required for localization in centrosome. In terms of tissue distribution, expressed in brain, kidney, lung, thymus and ovary. Not detectable in normal tissues at protein level.

It is found in the cytoplasm. It localises to the nucleus. Its subcellular location is the cytoskeleton. The protein localises to the microtubule organizing center. The protein resides in the centrosome. Its function is as follows. Plays a role in the microtubule-dependent coupling of the nucleus and the centrosome. Involved in the processes that regulate centrosome-mediated interkinetic nuclear migration (INM) of neural progenitors. May play a role in organizing centrosomal microtubules. This is Transforming acidic coiled-coil-containing protein 2 (Tacc2) from Mus musculus (Mouse).